The sequence spans 284 residues: Nucleotide-binding protein NMB0738 (284 aa).

8-15 (GLSGSGKS) contacts ATP. Residue 58–61 (DVRS) coordinates GTP.

This sequence belongs to the RapZ-like family.

Displays ATPase and GTPase activities. The chain is Nucleotide-binding protein NMB0738 from Neisseria meningitidis serogroup B (strain ATCC BAA-335 / MC58).